A 315-amino-acid polypeptide reads, in one-letter code: MRVVFMGTPDFAVGTLKAIIEAGHDVAAVVTQPDKPRGRSKSLVFSPVKDEAVAHGITVLQPERARDEAFVEELRTYNADVIVVVAFGQLLPASIINMPRYGCINVHASLLPKYRGASPIQWAVIDGCEYSGVTTMKMDEGLDTGDILMVEKVKLDAKETGGSLFDRLSDVGAHLLVKTLEGLEAGTITPVKQDDSESTYVKMLHKSFGKMDFNKSAAELERLIRGLNPWPSAFTYIDGKMLKIWDADVADNISEVQTEEVKPGQVVTVGKNTFTIACGQGYLVVNEVQLEGKKRMDSGSFLRGNQLEAGVMLGE.

Ser-109–Pro-112 serves as a coordination point for (6S)-5,6,7,8-tetrahydrofolate.

It belongs to the Fmt family.

It carries out the reaction L-methionyl-tRNA(fMet) + (6R)-10-formyltetrahydrofolate = N-formyl-L-methionyl-tRNA(fMet) + (6S)-5,6,7,8-tetrahydrofolate + H(+). Functionally, attaches a formyl group to the free amino group of methionyl-tRNA(fMet). The formyl group appears to play a dual role in the initiator identity of N-formylmethionyl-tRNA by promoting its recognition by IF2 and preventing the misappropriation of this tRNA by the elongation apparatus. The sequence is that of Methionyl-tRNA formyltransferase from Lachnospira eligens (strain ATCC 27750 / DSM 3376 / VPI C15-48 / C15-B4) (Eubacterium eligens).